We begin with the raw amino-acid sequence, 967 residues long: Isoleucine--tRNA ligase (967 aa).

Positions 68 to 78 (PYANGTLHMGH) match the 'HIGH' region motif. Glutamate 583 provides a ligand contact to L-isoleucyl-5'-AMP. The short motif at 624 to 628 (KMSKS) is the 'KMSKS' region element. Lysine 627 serves as a coordination point for ATP. Positions 937, 940, 957, and 960 each coordinate Zn(2+).

Belongs to the class-I aminoacyl-tRNA synthetase family. IleS type 1 subfamily. Monomer. Zn(2+) serves as cofactor.

The protein localises to the cytoplasm. The catalysed reaction is tRNA(Ile) + L-isoleucine + ATP = L-isoleucyl-tRNA(Ile) + AMP + diphosphate. Its function is as follows. Catalyzes the attachment of isoleucine to tRNA(Ile). As IleRS can inadvertently accommodate and process structurally similar amino acids such as valine, to avoid such errors it has two additional distinct tRNA(Ile)-dependent editing activities. One activity is designated as 'pretransfer' editing and involves the hydrolysis of activated Val-AMP. The other activity is designated 'posttransfer' editing and involves deacylation of mischarged Val-tRNA(Ile). This Prochlorococcus marinus (strain NATL2A) protein is Isoleucine--tRNA ligase.